An 807-amino-acid polypeptide reads, in one-letter code: Glycerol-3-phosphate acyltransferase (807 aa).

Positions 308–313 (CHRSHM) match the HXXXXD motif motif.

The protein belongs to the GPAT/DAPAT family.

It localises to the cell inner membrane. It carries out the reaction sn-glycerol 3-phosphate + an acyl-CoA = a 1-acyl-sn-glycero-3-phosphate + CoA. The protein operates within phospholipid metabolism; CDP-diacylglycerol biosynthesis; CDP-diacylglycerol from sn-glycerol 3-phosphate: step 1/3. This chain is Glycerol-3-phosphate acyltransferase, found in Shewanella baltica (strain OS195).